The chain runs to 162 residues: Transcriptional regulator MraZ (162 aa).

2 SpoVT-AbrB domains span residues 11-62 (EHPS…GLSV) and 98-141 (AVEC…SRDT).

The protein belongs to the MraZ family. As to quaternary structure, forms oligomers.

The protein resides in the cytoplasm. The protein localises to the nucleoid. In Pelobacter propionicus (strain DSM 2379 / NBRC 103807 / OttBd1), this protein is Transcriptional regulator MraZ.